The sequence spans 474 residues: tRNA-2-methylthio-N(6)-dimethylallyladenosine synthase (474 aa).

Positions 3 to 120 (KKLHIKTWGC…LPEMINSVRG (118 aa)) constitute an MTTase N-terminal domain. 6 residues coordinate [4Fe-4S] cluster: Cys12, Cys49, Cys83, Cys157, Cys161, and Cys164. In terms of domain architecture, Radical SAM core spans 143–375 (RAEGPTAFVS…QERINQQAMA (233 aa)). The 64-residue stretch at 378–441 (RRMLGTTQRI…PNSLRGKVVR (64 aa)) folds into the TRAM domain.

This sequence belongs to the methylthiotransferase family. MiaB subfamily. In terms of assembly, monomer. It depends on [4Fe-4S] cluster as a cofactor.

It localises to the cytoplasm. The enzyme catalyses N(6)-dimethylallyladenosine(37) in tRNA + (sulfur carrier)-SH + AH2 + 2 S-adenosyl-L-methionine = 2-methylsulfanyl-N(6)-dimethylallyladenosine(37) in tRNA + (sulfur carrier)-H + 5'-deoxyadenosine + L-methionine + A + S-adenosyl-L-homocysteine + 2 H(+). In terms of biological role, catalyzes the methylthiolation of N6-(dimethylallyl)adenosine (i(6)A), leading to the formation of 2-methylthio-N6-(dimethylallyl)adenosine (ms(2)i(6)A) at position 37 in tRNAs that read codons beginning with uridine. This Escherichia coli (strain UTI89 / UPEC) protein is tRNA-2-methylthio-N(6)-dimethylallyladenosine synthase.